Consider the following 408-residue polypeptide: MFDFMVYSPEVNAFLMSRGPGSTPLWGAAEAWISLAEQLMEAAQEVSDTIVVAVPASFAGETSDMLASRVSTFVAWLDGNAENAGLIARVLHAVAYAFEEARAGMVPLLTVLGNIIHTMALKAINWFGQVSTTVAALEADYDLMWVQNSTAMTTYRDTVLRETGKMENFEPAPQLVSRYCMDRRDSVNSFHSSSSSDSLYESIDNLYDSVAQSEEHGSDSMSQSYNTCGSVAQSELCDSPFGTPSQSSQSNDLSATSLTQQLGGLDSIISSASASLLTTNSISSSTASSIMPIVASQVTETLGRSQVAVEKMIQSISSTAVSVDVAASKVVAGVGQAVSVGALRVPENWATASQPVMATAHSVPAGCSAITTAVSGPLEGVTQPAEEVLTASVAGGSGTGGPAFNEAV.

Tandem repeats lie at residues 209 to 214 and 230 to 235. The interval 209–235 is 2 X 6 AA repeats of S-V-A-Q-S-E; it reads SVAQSEEHGSDSMSQSYNTCGSVAQSE.

Belongs to the mycobacterial PPE family.

The protein is Serine-rich antigen (sra) of Mycobacterium leprae (strain TN).